A 386-amino-acid polypeptide reads, in one-letter code: Succinate--CoA ligase [ADP-forming] subunit beta (386 aa).

The region spanning 9 to 244 (KELLRSYGVP…ETEEDPREVE (236 aa)) is the ATP-grasp domain. ATP is bound by residues K46, 53–55 (GRG), E99, C102, and E107. 2 residues coordinate Mg(2+): N199 and D213. Substrate-binding positions include N264 and 321–323 (GIM).

This sequence belongs to the succinate/malate CoA ligase beta subunit family. In terms of assembly, heterotetramer of two alpha and two beta subunits. The cofactor is Mg(2+).

The catalysed reaction is succinate + ATP + CoA = succinyl-CoA + ADP + phosphate. It catalyses the reaction GTP + succinate + CoA = succinyl-CoA + GDP + phosphate. It participates in carbohydrate metabolism; tricarboxylic acid cycle; succinate from succinyl-CoA (ligase route): step 1/1. In terms of biological role, succinyl-CoA synthetase functions in the citric acid cycle (TCA), coupling the hydrolysis of succinyl-CoA to the synthesis of either ATP or GTP and thus represents the only step of substrate-level phosphorylation in the TCA. The beta subunit provides nucleotide specificity of the enzyme and binds the substrate succinate, while the binding sites for coenzyme A and phosphate are found in the alpha subunit. The sequence is that of Succinate--CoA ligase [ADP-forming] subunit beta from Exiguobacterium sibiricum (strain DSM 17290 / CCUG 55495 / CIP 109462 / JCM 13490 / 255-15).